The chain runs to 161 residues: Phosphopantetheine adenylyltransferase (161 aa).

Substrate is bound at residue Ser10. Residues Ser10 to Phe11 and His18 contribute to the ATP site. Residues Lys42, Ala75, and Arg89 each coordinate substrate. ATP is bound by residues Gly90–Arg92, Glu100, and Leu125–Ser131.

It belongs to the bacterial CoaD family. As to quaternary structure, homohexamer. Mg(2+) is required as a cofactor.

The protein resides in the cytoplasm. The catalysed reaction is (R)-4'-phosphopantetheine + ATP + H(+) = 3'-dephospho-CoA + diphosphate. Its pathway is cofactor biosynthesis; coenzyme A biosynthesis; CoA from (R)-pantothenate: step 4/5. In terms of biological role, reversibly transfers an adenylyl group from ATP to 4'-phosphopantetheine, yielding dephospho-CoA (dPCoA) and pyrophosphate. This chain is Phosphopantetheine adenylyltransferase, found in Streptococcus agalactiae serotype III (strain NEM316).